The sequence spans 271 residues: Thiazole synthase (271 aa).

Catalysis depends on Lys104, which acts as the Schiff-base intermediate with DXP. 1-deoxy-D-xylulose 5-phosphate contacts are provided by residues Gly165, 192–193 (AG), and 214–215 (NT).

Belongs to the ThiG family. In terms of assembly, homotetramer. Forms heterodimers with either ThiH or ThiS.

It is found in the cytoplasm. It carries out the reaction [ThiS sulfur-carrier protein]-C-terminal-Gly-aminoethanethioate + 2-iminoacetate + 1-deoxy-D-xylulose 5-phosphate = [ThiS sulfur-carrier protein]-C-terminal Gly-Gly + 2-[(2R,5Z)-2-carboxy-4-methylthiazol-5(2H)-ylidene]ethyl phosphate + 2 H2O + H(+). Its pathway is cofactor biosynthesis; thiamine diphosphate biosynthesis. Its function is as follows. Catalyzes the rearrangement of 1-deoxy-D-xylulose 5-phosphate (DXP) to produce the thiazole phosphate moiety of thiamine. Sulfur is provided by the thiocarboxylate moiety of the carrier protein ThiS. In vitro, sulfur can be provided by H(2)S. In Burkholderia thailandensis (strain ATCC 700388 / DSM 13276 / CCUG 48851 / CIP 106301 / E264), this protein is Thiazole synthase.